A 92-amino-acid polypeptide reads, in one-letter code: Large ribosomal subunit protein eL43 (92 aa).

Zn(2+)-binding residues include Cys-39, Cys-42, Cys-57, and Cys-60. A C4-type zinc finger spans residues 39–60 (CSFCGKTKMKRRAVGIWHCGSC).

This sequence belongs to the eukaryotic ribosomal protein eL43 family. Component of the large ribosomal subunit.

The protein resides in the cytoplasm. Functionally, component of the large ribosomal subunit. The ribosome is a large ribonucleoprotein complex responsible for the synthesis of proteins in the cell. In Ictalurus punctatus (Channel catfish), this protein is Large ribosomal subunit protein eL43 (rpl37a).